The chain runs to 317 residues: Ferrochelatase (317 aa).

The Fe cation site is built by His187 and Glu268.

The protein belongs to the ferrochelatase family.

The protein localises to the cytoplasm. It catalyses the reaction heme b + 2 H(+) = protoporphyrin IX + Fe(2+). It functions in the pathway porphyrin-containing compound metabolism; protoheme biosynthesis; protoheme from protoporphyrin-IX: step 1/1. Its function is as follows. Catalyzes the ferrous insertion into protoporphyrin IX. This Campylobacter concisus (strain 13826) protein is Ferrochelatase.